The sequence spans 481 residues: Proton-coupled amino acid transporter 2 (481 aa).

The Cytoplasmic portion of the chain corresponds to 1 to 56; the sequence is MSVTKSAGSPQVAATVKLDLVSFPESAKKVQSQDPNPVNGSSSESSEKTKGITGFQ. Residues 26–49 form a disordered region; it reads SAKKVQSQDPNPVNGSSSESSEKT. Residues 29–40 are compositionally biased toward polar residues; that stretch reads KVQSQDPNPVNG. Residues 57-77 form a helical membrane-spanning segment; that stretch reads TLVHLVKGNMGTGILGLPLAV. At 78-79 the chain is on the extracellular side; the sequence is KN. A helical membrane pass occupies residues 80-100; that stretch reads AGILMGPLSLLVMGLIACHCM. Over 101 to 146 the chain is Cytoplasmic; it reads HILVRCAQRFCHRLNKPFMDYGDTVMHGLASSPNTWLQSHAHWGRH. A helical membrane pass occupies residues 147–167; it reads AVSFFLIVTQLGFCCVYIVFL. The Extracellular segment spans residues 168 to 195; the sequence is ADNLKQVVEAVNSTTISCHKNETVVLTP. A helical membrane pass occupies residues 196-216; the sequence is TIDSRLYMLAFLPVLGLLVFI. Topologically, residues 217–220 are cytoplasmic; it reads RNLR. Residues 221-241 traverse the membrane as a helical segment; the sequence is VLTIFSLLANVSMLVSLVIIG. Residues 242–262 lie on the Extracellular side of the membrane; that stretch reads QYIIQGIPDPSQLPLVASWKT. A helical membrane pass occupies residues 263–283; it reads YPLFFGTAIFSFESIGVVLPL. Over 284 to 295 the chain is Cytoplasmic; that stretch reads ENKMKDARRFPT. A helical transmembrane segment spans residues 296 to 316; sequence ILSLGMSIITTLYIAIGALGY. Residues 317 to 343 lie on the Extracellular side of the membrane; the sequence is LRFGDDIKASITLNLPNCWLYQSVKLL. Residues 344-364 traverse the membrane as a helical segment; that stretch reads YVVGILCTHALQFYVPAEIII. At 365–377 the chain is on the cytoplasmic side; the sequence is PLAVSQVSKRWAL. The chain crosses the membrane as a helical span at residues 378 to 398; sequence PVDLSIRLALVCVTCMLAILI. Residues 399–402 lie on the Extracellular side of the membrane; sequence PRLD. A helical transmembrane segment spans residues 403–423; the sequence is LVLSLVGSVSSSALALIIPPL. Residues 424–444 are Cytoplasmic-facing; the sequence is LEVTTYYGEGMSPLTITKDAL. A helical transmembrane segment spans residues 445 to 465; the sequence is ISILGFMGFVVGTYQALDELI. Topologically, residues 466–481 are extracellular; that stretch reads RSGNSLPLSNSTMFIQ.

This sequence belongs to the amino acid/polyamine transporter 2 family. Expressed in lung and spleen, and to a lower extent in brain, heart, kidney and skeletal muscle.

The protein localises to the cell membrane. It is found in the endoplasmic reticulum membrane. Its subcellular location is the recycling endosome membrane. It carries out the reaction glycine(in) + H(+)(in) = glycine(out) + H(+)(out). The catalysed reaction is L-alanine(in) + H(+)(in) = L-alanine(out) + H(+)(out). It catalyses the reaction D-alanine(in) + H(+)(in) = D-alanine(out) + H(+)(out). The enzyme catalyses L-proline(out) + H(+)(out) = L-proline(in) + H(+)(in). It carries out the reaction D-proline(out) + H(+)(out) = D-proline(in) + H(+)(in). The catalysed reaction is 4-hydroxy-L-proline(in) + H(+)(in) = 4-hydroxy-L-proline(out) + H(+)(out). It catalyses the reaction L-serine(in) + H(+)(in) = L-serine(out) + H(+)(out). The enzyme catalyses D-serine(out) + H(+)(out) = D-serine(in) + H(+)(in). It carries out the reaction beta-alanine(in) + H(+)(in) = beta-alanine(out) + H(+)(out). The catalysed reaction is 4-aminobutanoate(in) + H(+)(in) = 4-aminobutanoate(out) + H(+)(out). It catalyses the reaction sarcosine(in) + H(+)(in) = sarcosine(out) + H(+)(out). The enzyme catalyses N,N-dimethylglycine(in) + H(+)(in) = N,N-dimethylglycine(out) + H(+)(out). With respect to regulation, inhibited by L- and D-pipecolic acid, nipecotic acid, isonipecotic acid, L- and D-cycloserine, and L-2-azetidine-carboxylate. Its function is as follows. Electrogenic proton/amino acid symporter with a high selectivity for the small side chains amino acids glycine, alanine and proline, where both L- and D-enantiomers are transported. Extension of the backbone length, as in beta-alanine and 4-aminobutanoate or methylation of the amino group, as in sarcosine and N,N-dimethylglycine, are also tolerated but decrease transport efficiency. A free carboxyl group is preferred. This chain is Proton-coupled amino acid transporter 2, found in Rattus norvegicus (Rat).